Consider the following 171-residue polypeptide: Ponticulin-like protein F (171 aa).

The first 20 residues, 1–20, serve as a signal peptide directing secretion; the sequence is MKFIPALIIFVFTIFALTNS. Glycine 149 carries the GPI-like-anchor amidated glycine lipid modification. Positions 150–171 are cleaved as a propeptide — removed in mature form; sequence TSSTIVIPFALILSLLLSVITL.

It belongs to the ponticulin family. Post-translationally, the GPI-like-anchor contains a phosphoceramide group, rather than a phosphatidyl group.

The protein resides in the cell membrane. The protein is Ponticulin-like protein F (ponF) of Dictyostelium discoideum (Social amoeba).